A 73-amino-acid chain; its full sequence is TKCYVTPDVKSETCPAGQDICYTETWCDAWCTSRGKRVDLGCAATCPIVKPGVEIKCCSTDNCNPFPTWRKRP.

5 disulfides stabilise this stretch: cysteine 3-cysteine 21, cysteine 14-cysteine 42, cysteine 27-cysteine 31, cysteine 46-cysteine 57, and cysteine 58-cysteine 63.

Belongs to the three-finger toxin family. Long-chain subfamily. Type II alpha-neurotoxin sub-subfamily. As to expression, expressed by the venom gland.

Its subcellular location is the secreted. Functionally, binds with high affinity to muscular (alpha-1/CHRNA1) and neuronal (alpha-7/CHRNA7) nicotinic acetylcholine receptor (nAChR) and inhibits acetylcholine from binding to the receptor, thereby impairing neuromuscular and neuronal transmission. This chain is Long neurotoxin 1, found in Ophiophagus hannah (King cobra).